The following is a 139-amino-acid chain: Transcription antitermination protein NusB (139 aa).

This sequence belongs to the NusB family.

In terms of biological role, involved in transcription antitermination. Required for transcription of ribosomal RNA (rRNA) genes. Binds specifically to the boxA antiterminator sequence of the ribosomal RNA (rrn) operons. The protein is Transcription antitermination protein NusB of Limosilactobacillus fermentum (strain NBRC 3956 / LMG 18251) (Lactobacillus fermentum).